We begin with the raw amino-acid sequence, 375 residues long: Membrane progesterone receptor epsilon (375 aa).

Positions 1 to 39 (MPRRLQQRGAGVKGPPASTSRRSHPASASAPRSPPAATT) are disordered. Residues 1-84 (MPRRLQQRGA…VLKPTNETLN (84 aa)) are Cytoplasmic-facing. Residues 15-39 (PPASTSRRSHPASASAPRSPPAATT) show a composition bias toward low complexity. Residues 85–105 (FWTHFIPLLLFLSKFCRLFFL) traverse the membrane as a helical segment. Topologically, residues 106-114 (GGSDVPFHH) are extracellular. The chain crosses the membrane as a helical span at residues 115-135 (PWLLPLWCYASGVLLTFAMSC). Residues 136 to 160 (TAHVFSCLSLRLRAAFFYLDYASIS) are Cytoplasmic-facing. A helical membrane pass occupies residues 161-181 (YYGFGSTVAYYYYLLPSLSLL). Residues 182–203 (DARVMTPYVQQRLGWHVDCTRL) lie on the Extracellular side of the membrane. The chain crosses the membrane as a helical span at residues 204–224 (IAVYRALVLPVAFVLAVACTV). At 225–241 (ACCKSRTDWCSYPFALR) the chain is on the cytoplasmic side. Residues 242–262 (TFVFVMPLSMACPIMLESWLF) traverse the membrane as a helical segment. The Extracellular portion of the chain corresponds to 263–299 (DLRGENPTLFVHFYRRYFWLVVAAFFNVSKIPERIQP). A helical transmembrane segment spans residues 300–320 (GLFDIIGHSHQLFHIFTFLSI). The Cytoplasmic segment spans residues 321–341 (YDQVYYVEEGLRQFLQAPPAA). A helical transmembrane segment spans residues 342-362 (PTFSGTVGYMLLLVVCLGLVI). Topologically, residues 363–375 (RKFLNSTEFCSKK) are extracellular.

Belongs to the ADIPOR family. As to quaternary structure, homodimer.

The protein resides in the cell membrane. Its function is as follows. Plasma membrane progesterone (P4) receptor coupled to G proteins. Seems to act through a G(s) mediated pathway. May be involved in regulating rapid P4 signaling in the nervous system. Also binds dehydroepiandrosterone (DHEA), pregnanolone, pregnenolone and allopregnanolone. This Mus musculus (Mouse) protein is Membrane progesterone receptor epsilon.